A 473-amino-acid chain; its full sequence is MSTSLETPSGASAGPSIVASGLPPLADLVRAGSKRTRVVYGAETSAVEDDGLARANKIKLATKLAIEYKDVQTLPPILQAQQTGPAGPKRPTQPSIAASATAGPNVKLIGGPEAEKASSSTPQAVAEPRSLVKFRHQEGFAAEGGQATSRLSQALMRKKEAREVKPEYHPEWKLTRVISGHMGWVRAVAMDPGNQWFATGAGDRVIKIWDLASGELKLSLTGHISTIRGLAVSDRHPYLFSCAEDKMVKCWDLETNKVIRHYHGHFSGVYSLSVHPTLDVLVTGGRDASVRVWDMRTRANIFTLTGHTSTVGDVKTQDSDPQIISGSMDSTVRLWDLAAGKCMNTLTHHKKSVRALAIHPTEYSFASASSGGNNIKKWKCPEGIFVNNFVGHEAIINTLSINSENVLFSGADNGTLTLWDYKTGLPFQHLKDIPQPGSLDAEAGVFCSTFDKTGTRLITGGADKTIKVYSEQA.

Over residues 1-10 (MSTSLETPSG) the composition is skewed to polar residues. Disordered stretches follow at residues 1–21 (MSTSLETPSGASAGPSIVASG) and 103–126 (GPNVKLIGGPEAEKASSSTPQAVA). WD repeat units follow at residues 180–219 (GHMGWVRAVAMDPGNQWFATGAGDRVIKIWDLASGELKLS), 222–261 (GHISTIRGLAVSDRHPYLFSCAEDKMVKCWDLETNKVIRH), 264–303 (GHFSGVYSLSVHPTLDVLVTGGRDASVRVWDMRTRANIFT), 306–347 (GHTS…NTLT), 349–388 (HKKSVRALAIHPTEYSFASASSGGNNIKKWKCPEGIFVNN), 391–429 (GHEAIINTLSINSENVLFSGADNGTLTLWDYKTGLPFQH), and 440–473 (DAEAGVFCSTFDKTGTRLITGGADKTIKVYSEQA).

Belongs to the WD repeat PRL1/PRL2 family. Associated with the spliceosome.

Its subcellular location is the cytoplasm. The protein resides in the nucleus. Functionally, involved in pre-mRNA splicing and required for cell cycle progression at G2/M. The polypeptide is Pre-mRNA-splicing factor PRP46 (PRP46) (Cryptococcus neoformans var. neoformans serotype D (strain JEC21 / ATCC MYA-565) (Filobasidiella neoformans)).